The following is a 132-amino-acid chain: Insulin-like 3 (132 aa).

The first 24 residues, 1-24 (MSPRPLAWALVLLGAALAVALALG), serve as a signal peptide directing secretion. Intrachain disulfides connect C36-C117, C48-C130, and C116-C121. Positions 61–104 (VAGGDRELLQWLEGRHLHGQVSDGDPMLVLVPQALPQASLHHHH) are cleaved as a propeptide — c peptide like.

Belongs to the insulin family. Heterodimer of a B chain and an A chain linked by two disulfide bonds. More strongly expressed in testis than in ovary.

Its subcellular location is the secreted. Its function is as follows. Seems to play a role in testicular function. May be a trophic hormone with a role in testicular descent in fetal life. Is a ligand for LGR8 receptor. The sequence is that of Insulin-like 3 (INSL3) from Canis lupus familiaris (Dog).